Reading from the N-terminus, the 372-residue chain is Putative 26S proteasome regulatory subunit homolog MTH_1011 (372 aa).

164–171 serves as a coordination point for ATP; the sequence is GSPGTGKT.

This sequence belongs to the AAA ATPase family.

The 26S proteasome is involved in the ATP-dependent degradation of ubiquitinated proteins. The regulatory (or ATPase) complex confers ATP dependency and substrate specificity to the 26S complex. This Methanothermobacter thermautotrophicus (strain ATCC 29096 / DSM 1053 / JCM 10044 / NBRC 100330 / Delta H) (Methanobacterium thermoautotrophicum) protein is Putative 26S proteasome regulatory subunit homolog MTH_1011.